A 338-amino-acid chain; its full sequence is Lipoyl synthase (338 aa).

The interval 1-22 (MTTVQEAVPNLIPTQDVTPRPA) is disordered. Positions 84, 89, 95, 110, 114, 117, and 324 each coordinate [4Fe-4S] cluster. One can recognise a Radical SAM core domain in the interval 96–313 (FSGGTATFMI…AEEGYKMGFK (218 aa)).

It belongs to the radical SAM superfamily. Lipoyl synthase family. The cofactor is [4Fe-4S] cluster.

It localises to the cytoplasm. It carries out the reaction [[Fe-S] cluster scaffold protein carrying a second [4Fe-4S](2+) cluster] + N(6)-octanoyl-L-lysyl-[protein] + 2 oxidized [2Fe-2S]-[ferredoxin] + 2 S-adenosyl-L-methionine + 4 H(+) = [[Fe-S] cluster scaffold protein] + N(6)-[(R)-dihydrolipoyl]-L-lysyl-[protein] + 4 Fe(3+) + 2 hydrogen sulfide + 2 5'-deoxyadenosine + 2 L-methionine + 2 reduced [2Fe-2S]-[ferredoxin]. The protein operates within protein modification; protein lipoylation via endogenous pathway; protein N(6)-(lipoyl)lysine from octanoyl-[acyl-carrier-protein]: step 2/2. In terms of biological role, catalyzes the radical-mediated insertion of two sulfur atoms into the C-6 and C-8 positions of the octanoyl moiety bound to the lipoyl domains of lipoate-dependent enzymes, thereby converting the octanoylated domains into lipoylated derivatives. This chain is Lipoyl synthase, found in Pseudomonas entomophila (strain L48).